The following is a 118-amino-acid chain: Large ribosomal subunit protein uL24 (118 aa).

The protein belongs to the universal ribosomal protein uL24 family. In terms of assembly, part of the 50S ribosomal subunit.

Functionally, one of two assembly initiator proteins, it binds directly to the 5'-end of the 23S rRNA, where it nucleates assembly of the 50S subunit. Its function is as follows. One of the proteins that surrounds the polypeptide exit tunnel on the outside of the subunit. The protein is Large ribosomal subunit protein uL24 of Prochlorococcus marinus subsp. pastoris (strain CCMP1986 / NIES-2087 / MED4).